We begin with the raw amino-acid sequence, 255 residues long: Thiazole synthase (255 aa).

Lys-96 serves as the catalytic Schiff-base intermediate with DXP. Residues Gly-157, 183-184 (AG), and 205-206 (NT) each bind 1-deoxy-D-xylulose 5-phosphate.

This sequence belongs to the ThiG family. As to quaternary structure, homotetramer. Forms heterodimers with either ThiH or ThiS.

The protein localises to the cytoplasm. The enzyme catalyses [ThiS sulfur-carrier protein]-C-terminal-Gly-aminoethanethioate + 2-iminoacetate + 1-deoxy-D-xylulose 5-phosphate = [ThiS sulfur-carrier protein]-C-terminal Gly-Gly + 2-[(2R,5Z)-2-carboxy-4-methylthiazol-5(2H)-ylidene]ethyl phosphate + 2 H2O + H(+). The protein operates within cofactor biosynthesis; thiamine diphosphate biosynthesis. In terms of biological role, catalyzes the rearrangement of 1-deoxy-D-xylulose 5-phosphate (DXP) to produce the thiazole phosphate moiety of thiamine. Sulfur is provided by the thiocarboxylate moiety of the carrier protein ThiS. In vitro, sulfur can be provided by H(2)S. The chain is Thiazole synthase from Geobacillus sp. (strain WCH70).